The sequence spans 59 residues: Large ribosomal subunit protein uL30 (59 aa).

Belongs to the universal ribosomal protein uL30 family. Part of the 50S ribosomal subunit.

The protein is Large ribosomal subunit protein uL30 of Actinobacillus pleuropneumoniae serotype 7 (strain AP76).